The sequence spans 221 residues: MNFNVIIDHTLLKPQATSQDIKILIEEAKKYNFGAICIAPIWVKLAKKELKNTNIKIVTVIGFPLGSQISAIKQKEASLAIAHGADEIDMVMNIGKFKEKDFQFIINEINQIKKEIGTKILKVIIETALLSPHEIADATKLVSSTNADFIKTSTGFSYRGASEQDLKIIKENKSEKLAIKAAGGITNLADMENFYRLGATRFGTSKSVSIIKNLTDKKNEY.

D89 acts as the Proton donor/acceptor in catalysis. K151 (schiff-base intermediate with acetaldehyde) is an active-site residue. K180 serves as the catalytic Proton donor/acceptor.

Belongs to the DeoC/FbaB aldolase family. DeoC type 1 subfamily.

Its subcellular location is the cytoplasm. It carries out the reaction 2-deoxy-D-ribose 5-phosphate = D-glyceraldehyde 3-phosphate + acetaldehyde. Its pathway is carbohydrate degradation; 2-deoxy-D-ribose 1-phosphate degradation; D-glyceraldehyde 3-phosphate and acetaldehyde from 2-deoxy-alpha-D-ribose 1-phosphate: step 2/2. Functionally, catalyzes a reversible aldol reaction between acetaldehyde and D-glyceraldehyde 3-phosphate to generate 2-deoxy-D-ribose 5-phosphate. The chain is Deoxyribose-phosphate aldolase from Mesomycoplasma hyopneumoniae (strain J / ATCC 25934 / NCTC 10110) (Mycoplasma hyopneumoniae).